The following is a 190-amino-acid chain: Bifunctional protein PyrR (190 aa).

Positions 112-124 (VILVDDVLYSGRS) match the PRPP-binding motif.

Belongs to the purine/pyrimidine phosphoribosyltransferase family. PyrR subfamily.

It carries out the reaction UMP + diphosphate = 5-phospho-alpha-D-ribose 1-diphosphate + uracil. Functionally, regulates the transcription of the pyrimidine nucleotide (pyr) operon in response to exogenous pyrimidines. Its function is as follows. Also displays a weak uracil phosphoribosyltransferase activity which is not physiologically significant. This is Bifunctional protein PyrR from Mycolicibacterium paratuberculosis (strain ATCC BAA-968 / K-10) (Mycobacterium paratuberculosis).